The sequence spans 238 residues: Phosphoribosylaminoimidazole-succinocarboxamide synthase (238 aa).

It belongs to the SAICAR synthetase family.

It catalyses the reaction 5-amino-1-(5-phospho-D-ribosyl)imidazole-4-carboxylate + L-aspartate + ATP = (2S)-2-[5-amino-1-(5-phospho-beta-D-ribosyl)imidazole-4-carboxamido]succinate + ADP + phosphate + 2 H(+). It participates in purine metabolism; IMP biosynthesis via de novo pathway; 5-amino-1-(5-phospho-D-ribosyl)imidazole-4-carboxamide from 5-amino-1-(5-phospho-D-ribosyl)imidazole-4-carboxylate: step 1/2. This is Phosphoribosylaminoimidazole-succinocarboxamide synthase from Persephonella marina (strain DSM 14350 / EX-H1).